The following is a 349-amino-acid chain: Ion-translocating oxidoreductase complex subunit D (349 aa).

Helical transmembrane passes span 36 to 56 (CAFF…VALS), 77 to 99 (SAML…WMIV), and 124 to 144 (AMAA…SWIA). The residue at position 185 (T185) is an FMN phosphoryl threonine. The next 5 membrane-spanning stretches (helical) occupy residues 212–232 (GTGV…LVLL), 239–259 (WHIS…GFLL), 265–285 (ASPL…FIAT), 291–311 (ATSP…VYVI), and 315–335 (GGYP…APFI).

It belongs to the NqrB/RnfD family. As to quaternary structure, the complex is composed of six subunits: RnfA, RnfB, RnfC, RnfD, RnfE and RnfG. Requires FMN as cofactor.

Its subcellular location is the cell inner membrane. Part of a membrane-bound complex that couples electron transfer with translocation of ions across the membrane. The protein is Ion-translocating oxidoreductase complex subunit D of Shewanella sp. (strain MR-4).